A 566-amino-acid polypeptide reads, in one-letter code: Protein kintoun (566 aa).

Disordered stretches follow at residues 183-298 (KYKG…TAPQ), 399-467 (EEEE…AETG), and 493-552 (QLEE…ESRI). The segment covering 208 to 290 (PQQTTGPQQP…HQPTDPQQTT (83 aa)) has biased composition (low complexity). A compositionally biased stretch (basic and acidic residues) spans 399–424 (EEEERRAEEEESRKGGDEDGELHPDC). Residues 440-467 (TPAADTHTPAADTHTPAADTHTPAAETG) show a composition bias toward low complexity. Residues 535-550 (DPAHTDPAHTDPEMES) show a composition bias toward basic and acidic residues.

The protein belongs to the PIH1 family. Kintoun subfamily.

The protein resides in the cytoplasm. It localises to the dynein axonemal particle. Its function is as follows. Required for cytoplasmic pre-assembly of axonemal dyneins, thereby playing a central role in motility in cilia and flagella. Involved in pre-assembly of dynein arm complexes in the cytoplasm before intraflagellar transport loads them for the ciliary compartment. This is Protein kintoun from Danio rerio (Zebrafish).